The following is a 117-amino-acid chain: Putative membrane protein insertion efficiency factor (117 aa).

The protein belongs to the UPF0161 family.

The protein resides in the cell inner membrane. In terms of biological role, could be involved in insertion of integral membrane proteins into the membrane. The protein is Putative membrane protein insertion efficiency factor of Nitrobacter winogradskyi (strain ATCC 25391 / DSM 10237 / CIP 104748 / NCIMB 11846 / Nb-255).